Here is a 57-residue protein sequence, read N- to C-terminus: MNRIVAPAAASVVVGLLLGAAAIFGVTLMVQQDKKPPLPGGDPSSSVLNRVEYGNRS.

Residues 1 to 32 (MNRIVAPAAASVVVGLLLGAAAIFGVTLMVQQ) form the signal peptide. The interval 34 to 57 (KKPPLPGGDPSSSVLNRVEYGNRS) is disordered.

The chain is Putative secreted protein MT0250 from Mycobacterium tuberculosis (strain CDC 1551 / Oshkosh).